We begin with the raw amino-acid sequence, 360 residues long: Phospho-N-acetylmuramoyl-pentapeptide-transferase (360 aa).

Helical transmembrane passes span 21 to 41, 71 to 91, 94 to 114, 142 to 162, 168 to 188, 199 to 219, 236 to 256, 263 to 283, 288 to 308, and 338 to 358; these read YLTF…LWIG, TPTM…ILWA, SNPY…IGFI, LVVA…VLVV, IMPQ…VGAS, GLAI…AWAT, ASEL…FLWF, VFMG…IAVL, FLLF…ILQV, and VIVR…VTLK.

Belongs to the glycosyltransferase 4 family. MraY subfamily. Mg(2+) serves as cofactor.

The protein resides in the cell inner membrane. It catalyses the reaction UDP-N-acetyl-alpha-D-muramoyl-L-alanyl-gamma-D-glutamyl-meso-2,6-diaminopimeloyl-D-alanyl-D-alanine + di-trans,octa-cis-undecaprenyl phosphate = di-trans,octa-cis-undecaprenyl diphospho-N-acetyl-alpha-D-muramoyl-L-alanyl-D-glutamyl-meso-2,6-diaminopimeloyl-D-alanyl-D-alanine + UMP. It participates in cell wall biogenesis; peptidoglycan biosynthesis. In terms of biological role, catalyzes the initial step of the lipid cycle reactions in the biosynthesis of the cell wall peptidoglycan: transfers peptidoglycan precursor phospho-MurNAc-pentapeptide from UDP-MurNAc-pentapeptide onto the lipid carrier undecaprenyl phosphate, yielding undecaprenyl-pyrophosphoryl-MurNAc-pentapeptide, known as lipid I. This Tolumonas auensis (strain DSM 9187 / NBRC 110442 / TA 4) protein is Phospho-N-acetylmuramoyl-pentapeptide-transferase.